The chain runs to 661 residues: Protein SPH1 (661 aa).

Disordered stretches follow at residues 313 to 340 (KDIS…KKSD) and 356 to 418 (SESS…QGNT). Residues 318 to 330 (LGDSGSTAVSFPS) show a composition bias toward polar residues. Over residues 356-365 (SESSIRESGK) the composition is skewed to basic and acidic residues. 2 stretches are compositionally biased toward polar residues: residues 366-395 (VRNN…TSEP) and 406-418 (VSNS…QGNT).

In terms of assembly, conjugated with HUB1. HUB1 has not the classical C-terminal Gly residue, so it is still unknown how conjugation may occur.

The protein localises to the bud tip. It is found in the bud neck. It localises to the cytoplasm. The protein resides in the cytoskeleton. Its function is as follows. Polarity-determining protein which forms a conjugate with the ubiquitin-like modifier HUB1. Involved in bud site selection and cellular morphogenesis during conjugation. Required for pseudohyphal growth. The chain is Protein SPH1 (SPH1) from Saccharomyces cerevisiae (strain ATCC 204508 / S288c) (Baker's yeast).